A 631-amino-acid polypeptide reads, in one-letter code: UvrABC system protein C (631 aa).

The GIY-YIG domain occupies 26–105; it reads SSPGVYQFKN…IKELKPRYNV (80 aa). One can recognise a UVR domain in the interval 219 to 254; the sequence is SATIRSLNERMLSFAKELKFEQAAELKTQIDSLKRY.

This sequence belongs to the UvrC family. Interacts with UvrB in an incision complex.

Its subcellular location is the cytoplasm. The UvrABC repair system catalyzes the recognition and processing of DNA lesions. UvrC both incises the 5' and 3' sides of the lesion. The N-terminal half is responsible for the 3' incision and the C-terminal half is responsible for the 5' incision. The sequence is that of UvrABC system protein C from Chlorobium phaeobacteroides (strain DSM 266 / SMG 266 / 2430).